Here is a 507-residue protein sequence, read N- to C-terminus: Beta-glucosidase 12 (507 aa).

The signal sequence occupies residues 1–22 (MRTIYLSLLVFIIVLALNEVMA). Gln-50 is a binding site for a beta-D-glucoside. Asn-81 is a glycosylation site (N-linked (GlcNAc...) asparagine). A beta-D-glucoside-binding positions include His-154 and 199–200 (NE). Residue Glu-200 is the Proton donor of the active site. Cys-219 and Cys-227 are disulfide-bonded. Asn-226 is a glycosylation site (N-linked (GlcNAc...) asparagine). Tyr-344 lines the a beta-D-glucoside pocket. N-linked (GlcNAc...) asparagine glycosylation is present at Asn-358. A beta-D-glucoside-binding positions include Glu-414, Trp-459, 466 to 467 (EW), and Phe-475. Catalysis depends on Glu-414, which acts as the Nucleophile.

It belongs to the glycosyl hydrolase 1 family.

It carries out the reaction Hydrolysis of terminal, non-reducing beta-D-glucosyl residues with release of beta-D-glucose.. The sequence is that of Beta-glucosidase 12 from Arabidopsis thaliana (Mouse-ear cress).